The chain runs to 672 residues: DNA ligase (672 aa).

Residues 34-38 (DSVYD), 83-84 (SL), and glutamate 113 contribute to the NAD(+) site. Lysine 115 acts as the N6-AMP-lysine intermediate in catalysis. NAD(+) is bound by residues arginine 136, glutamate 170, lysine 286, and lysine 310. Residues cysteine 404, cysteine 407, cysteine 422, and cysteine 427 each coordinate Zn(2+). The region spanning 592–672 (STDSSFNGLR…EFIQQMEEES (81 aa)) is the BRCT domain.

It belongs to the NAD-dependent DNA ligase family. LigA subfamily. The cofactor is Mg(2+). Mn(2+) is required as a cofactor.

The enzyme catalyses NAD(+) + (deoxyribonucleotide)n-3'-hydroxyl + 5'-phospho-(deoxyribonucleotide)m = (deoxyribonucleotide)n+m + AMP + beta-nicotinamide D-nucleotide.. In terms of biological role, DNA ligase that catalyzes the formation of phosphodiester linkages between 5'-phosphoryl and 3'-hydroxyl groups in double-stranded DNA using NAD as a coenzyme and as the energy source for the reaction. It is essential for DNA replication and repair of damaged DNA. The protein is DNA ligase of Ligilactobacillus salivarius (strain UCC118) (Lactobacillus salivarius).